The primary structure comprises 84 residues: Translation initiation factor IF-1, chloroplastic (84 aa).

Residues 1–72 (MKKQNLVEME…SKGRITYRLR (72 aa)) enclose the S1-like domain.

Belongs to the IF-1 family. In terms of assembly, component of the 30S ribosomal translation pre-initiation complex which assembles on the 30S ribosome in the order IF-2 and IF-3, IF-1 and N-formylmethionyl-tRNA(fMet); mRNA recruitment can occur at any time during PIC assembly.

Its subcellular location is the plastid. The protein localises to the chloroplast. In terms of biological role, one of the essential components for the initiation of protein synthesis. Stabilizes the binding of IF-2 and IF-3 on the 30S subunit to which N-formylmethionyl-tRNA(fMet) subsequently binds. Helps modulate mRNA selection, yielding the 30S pre-initiation complex (PIC). Upon addition of the 50S ribosomal subunit IF-1, IF-2 and IF-3 are released leaving the mature 70S translation initiation complex. This chain is Translation initiation factor IF-1, chloroplastic, found in Spirogyra maxima (Green alga).